The chain runs to 256 residues: NAD-dependent protein deacylase 2 (256 aa).

The 256-residue stretch at 1 to 256 (MDSHSPIATV…MPQVVSHIYR (256 aa)) folds into the Deacetylase sirtuin-type domain. NAD(+) is bound by residues 25-44 (GAGLSADSGMPTYRGLGGLY) and 108-111 (QNID). Residue H128 is the Proton acceptor of the active site. Zn(2+) contacts are provided by C136, C139, C158, and C161. NAD(+) is bound by residues 199-201 (GTT), 225-227 (NPG), and A243.

Belongs to the sirtuin family. Class III subfamily. The cofactor is Zn(2+).

It localises to the cytoplasm. The catalysed reaction is N(6)-acetyl-L-lysyl-[protein] + NAD(+) + H2O = 2''-O-acetyl-ADP-D-ribose + nicotinamide + L-lysyl-[protein]. NAD-dependent protein deacetylase which modulates the activities of several proteins which are inactive in their acetylated form. The sequence is that of NAD-dependent protein deacylase 2 (cobB2) from Pseudomonas aeruginosa (strain ATCC 15692 / DSM 22644 / CIP 104116 / JCM 14847 / LMG 12228 / 1C / PRS 101 / PAO1).